We begin with the raw amino-acid sequence, 40 residues long: MADTTGRIPLWVIGTVAGILVIGIIGIFFYGSYSGLGSSL.

A helical transmembrane segment spans residues 8–28 (IPLWVIGTVAGILVIGIIGIF).

It belongs to the PsbJ family. In terms of assembly, PSII is composed of 1 copy each of membrane proteins PsbA, PsbB, PsbC, PsbD, PsbE, PsbF, PsbH, PsbI, PsbJ, PsbK, PsbL, PsbM, PsbT, PsbX, PsbY, PsbZ, Psb30/Ycf12, at least 3 peripheral proteins of the oxygen-evolving complex and a large number of cofactors. It forms dimeric complexes.

The protein resides in the plastid. The protein localises to the chloroplast thylakoid membrane. One of the components of the core complex of photosystem II (PSII). PSII is a light-driven water:plastoquinone oxidoreductase that uses light energy to abstract electrons from H(2)O, generating O(2) and a proton gradient subsequently used for ATP formation. It consists of a core antenna complex that captures photons, and an electron transfer chain that converts photonic excitation into a charge separation. The sequence is that of Photosystem II reaction center protein J from Lobularia maritima (Sweet alyssum).